The primary structure comprises 380 residues: Cystathionine gamma-synthase (380 aa).

K195 bears the N6-(pyridoxal phosphate)lysine mark.

This sequence belongs to the trans-sulfuration enzymes family. As to quaternary structure, homotetramer. Pyridoxal 5'-phosphate is required as a cofactor.

It is found in the cytoplasm. The enzyme catalyses O-succinyl-L-homoserine + L-cysteine = L,L-cystathionine + succinate + H(+). Its function is as follows. Catalyzes the formation of L-cystathionine from O-succinyl-L-homoserine (OSHS) and L-cysteine, via a gamma-replacement reaction. In the absence of thiol, catalyzes gamma-elimination to form 2-oxobutanoate, succinate and ammonia. This chain is Cystathionine gamma-synthase (metB), found in Helicobacter pylori (strain J99 / ATCC 700824) (Campylobacter pylori J99).